The following is a 171-amino-acid chain: Deoxyuridine 5'-triphosphate nucleotidohydrolase (171 aa).

Glutamate 143 lines the Mg(2+) pocket.

This sequence belongs to the dUTPase family. Homotrimer. Mg(2+) is required as a cofactor.

It carries out the reaction dUTP + H2O = dUMP + diphosphate + H(+). It functions in the pathway pyrimidine metabolism; dUMP biosynthesis; dUMP from dCTP (dUTP route): step 2/2. Functionally, this enzyme is involved in nucleotide metabolism: it produces dUMP, the immediate precursor of thymidine nucleotides and it decreases the intracellular concentration of dUTP, preventing uracil incorporation into DNA. The sequence is that of Deoxyuridine 5'-triphosphate nucleotidohydrolase (DUT) from Oryza sativa subsp. japonica (Rice).